Reading from the N-terminus, the 291-residue chain is 4-hydroxy-tetrahydrodipicolinate synthase (291 aa).

Threonine 45 serves as a coordination point for pyruvate. Tyrosine 131 acts as the Proton donor/acceptor in catalysis. Catalysis depends on lysine 159, which acts as the Schiff-base intermediate with substrate. A pyruvate-binding site is contributed by isoleucine 202.

Belongs to the DapA family. As to quaternary structure, homotetramer; dimer of dimers.

It localises to the cytoplasm. The catalysed reaction is L-aspartate 4-semialdehyde + pyruvate = (2S,4S)-4-hydroxy-2,3,4,5-tetrahydrodipicolinate + H2O + H(+). It participates in amino-acid biosynthesis; L-lysine biosynthesis via DAP pathway; (S)-tetrahydrodipicolinate from L-aspartate: step 3/4. Functionally, catalyzes the condensation of (S)-aspartate-beta-semialdehyde [(S)-ASA] and pyruvate to 4-hydroxy-tetrahydrodipicolinate (HTPA). This Methanosarcina mazei (strain ATCC BAA-159 / DSM 3647 / Goe1 / Go1 / JCM 11833 / OCM 88) (Methanosarcina frisia) protein is 4-hydroxy-tetrahydrodipicolinate synthase.